We begin with the raw amino-acid sequence, 282 residues long: AB hydrolase superfamily protein FGSG_00045 (282 aa).

Positions 1-10 (MAPISSTRPS) are enriched in polar residues. The interval 1–22 (MAPISSTRPSHSIAADNPNPTT) is disordered. The AB hydrolase-1 domain occupies 22-270 (TQVNFNTNMT…FADMVKRWII (249 aa)).

The protein belongs to the AB hydrolase superfamily.

It participates in mycotoxin biosynthesis. Functionally, AB hydrolase superfamily protein; part of the gene cluster that mediates the biosynthesis of gramillins A and B, bicyclic lipopeptides that induce cell death in maize leaves but not in wheat leaves. The nonribosomal peptide synthetase GRA1 incorporates respectively a glutamic adic (Glu), a leucine (Leu), a serine (Ser), a hydroxyglutamine (HOGln), a 2-amino decanoic acid, and 2 cysteins (CysB and CysA). The biosynthesis of 2-amino decanoic acid incorporated in gramillins could be initiated by a fatty acid synthase composed of the alpha and beta subunits FGSG_00036 and FGSG_11656. The cytochrome P450 monooxygenase FGSG_15680 could hydroxylate the fatty acid chain. Subsequent oxidation to the ketone by the oxidoreductase FGSG_00048 and transamination by aminotransferase FGSG_00049 could form 2-amino-decanoic acid. On the other hand, FGSG_15680 could also be responsible for the HO-modified glutamine at the gamma-position. Whether hydroxylation occurs on the fully assembled product or on the Gln residue prior to assembly into the gramillins requires further proof. The thioredoxin FGSG_00043 could also be required for the disulfide-bond formation between CysA and CysB. The specific involvement of the remaining proteins from the cluster is more difficult to discern, but could have broader regulatory (FGSG_00040 and FGSG_11657) or enzymatic functions (FGSG_00044 and FGSG_00045). The final C-domain of GRA1 does not possess the expected sequence of a termination CT domain, often implicated in macrocyclization and release of a cyclopeptidein fungal NRPs; and the thioesterase FGSG_00047 may act in concert with the terminal C-domain of GRA1 to catalyze the formation of the macrocyclic anhydride and release of the products. This is AB hydrolase superfamily protein FGSG_00045 from Gibberella zeae (strain ATCC MYA-4620 / CBS 123657 / FGSC 9075 / NRRL 31084 / PH-1) (Wheat head blight fungus).